Consider the following 248-residue polypeptide: Pyridoxine 5'-phosphate synthase (248 aa).

N12 provides a ligand contact to 3-amino-2-oxopropyl phosphate. 14-15 (DH) contacts 1-deoxy-D-xylulose 5-phosphate. R23 is a 3-amino-2-oxopropyl phosphate binding site. Residue H48 is the Proton acceptor of the active site. Residues R50 and H55 each contribute to the 1-deoxy-D-xylulose 5-phosphate site. The active-site Proton acceptor is E75. T105 is a 1-deoxy-D-xylulose 5-phosphate binding site. H196 serves as the catalytic Proton donor. 3-amino-2-oxopropyl phosphate-binding positions include G197 and 218–219 (GH).

It belongs to the PNP synthase family. In terms of assembly, homooctamer; tetramer of dimers.

The protein localises to the cytoplasm. The enzyme catalyses 3-amino-2-oxopropyl phosphate + 1-deoxy-D-xylulose 5-phosphate = pyridoxine 5'-phosphate + phosphate + 2 H2O + H(+). It participates in cofactor biosynthesis; pyridoxine 5'-phosphate biosynthesis; pyridoxine 5'-phosphate from D-erythrose 4-phosphate: step 5/5. Its function is as follows. Catalyzes the complicated ring closure reaction between the two acyclic compounds 1-deoxy-D-xylulose-5-phosphate (DXP) and 3-amino-2-oxopropyl phosphate (1-amino-acetone-3-phosphate or AAP) to form pyridoxine 5'-phosphate (PNP) and inorganic phosphate. This chain is Pyridoxine 5'-phosphate synthase, found in Azotobacter vinelandii (strain DJ / ATCC BAA-1303).